We begin with the raw amino-acid sequence, 302 residues long: Glycine--tRNA ligase alpha subunit (302 aa).

It belongs to the class-II aminoacyl-tRNA synthetase family. Tetramer of two alpha and two beta subunits.

It is found in the cytoplasm. The catalysed reaction is tRNA(Gly) + glycine + ATP = glycyl-tRNA(Gly) + AMP + diphosphate. This Psychromonas ingrahamii (strain DSM 17664 / CCUG 51855 / 37) protein is Glycine--tRNA ligase alpha subunit.